Here is a 330-residue protein sequence, read N- to C-terminus: RNA polymerase sigma factor RpoS (330 aa).

Residues 56 to 89 form a sigma-70 factor domain-1 region; it reads DATQLYLGEIGYSPLLTAEEEVYFARRALRGDVA. Residues 94 to 164 are sigma-70 factor domain-2; the sequence is MIESNLRLVV…ERAIMNQTRT (71 aa). Positions 118-121 match the Interaction with polymerase core subunit RpoC motif; sequence DLIE. A sigma-70 factor domain-3 region spans residues 174 to 249; the sequence is ELNVYLRTAR…DEKENGPEDT (76 aa). A sigma-70 factor domain-4 region spans residues 262–315; it reads WLFELNAKQREVLARRFGLLGYEAATLEDVGREIGLTRERVRQIQVEGLRRLRE. The segment at residues 288-307 is a DNA-binding region (H-T-H motif); it reads LEDVGREIGLTRERVRQIQV.

Belongs to the sigma-70 factor family. RpoS subfamily. In terms of assembly, interacts with the RNA polymerase core enzyme and RssB.

It is found in the cytoplasm. In terms of biological role, sigma factors are initiation factors that promote the attachment of RNA polymerase to specific initiation sites and are then released. This sigma factor is the master transcriptional regulator of the stationary phase and the general stress response. Controls, positively or negatively, the expression of several hundred genes, which are mainly involved in metabolism, transport, regulation and stress management. Functionally, protects stationary phase cells from killing induced by endoribonuclease MazF. The chain is RNA polymerase sigma factor RpoS from Escherichia coli (strain K12).